We begin with the raw amino-acid sequence, 455 residues long: O-acyltransferase pigD (455 aa).

Belongs to the trichothecene 3-O-acetyltransferase family.

It functions in the pathway secondary metabolite biosynthesis. In terms of biological role, O-acetyltransferase; part of the gene cluster that mediates the biosynthesis of azaphilone pigments (MonAzPs), a complex mixture of compounds with a common azaphilone skeleton very widely used as food colorants. Within the pathway, pigD directly transfers the fatty acyl chain from the beta-ketoacyl-ACP produced by the pigJ-pigK fatty acid synthase (FAS) to the C-4 alcohol. The first step of the pathway is performed by the nrPKS pigA that forms the hexaketide precursor from successive condensations of five malonyl-CoA units, with a simple acetyl-CoA starter unit. The role of esterase pigG is not clear, but it may play at most a supplementary role in the formation of the benzaldehyde produced by the pigA nrPKS. This very reactive benzaldehyde is intercepted by the pigC ketoreductase that to provide the first stable enzyme-free MonAzPs intermediate, 6-(4-hydroxy-2-oxopentyl)-3-methyl-2,4-dioxocyclohexane carbaldehyde, also known as M7PKS-1. The FAD-dependent monooxygenase pigN hydroxylates M7PKS-1 at C-4, which triggers the formation of the pyran ring. PigJ, pigK and pigD are involved in the acetylation of the pyran ring. PigJ and pigK form the two subunits of a dedicated fungal FAS that produces the side chain fatty acyl moiety of MonAzPs and pigD transfers the fatty acyl chain to the C-4 alcohol. PigM and pigO are involved in the elimination of the omega-1 alcohol. PigM acts as an O-acetyltransferase that synthesizes the putative O-11 acetyl intermediate whereas pigO eliminates acetic acid to yield an intermediate with a C10(11) double bond. The dehydration of the C-11 alcohol followed by the reduction of the C6(7) double bond by the NAD(P)H-dependent oxidoreductase pigE increases the electrophilicity of the C-5 ketone of the resulting acyl benzopyran. This in turn sets up the C-5 ketone for an intramolecular Knoevenagel aldol condensation with the C-20 enol of the side chain. This condensation affords the characteristic linear tricyclic carbon skeletons of the yellow pigments that serve as the common precursors for the classical yellow pigments monascin and ankaflavin, orange pigments rubopunctatin and monascorubrin, and red pigments ribropunctamine and monascorubramine. The FAD-dependent oxidoreductase pigF is especially invoved in the biosynthesis of orange and red pigments via desaturation of C6(7). The polypeptide is O-acyltransferase pigD (Monascus ruber (Mold)).